A 180-amino-acid chain; its full sequence is Cytokinin-beta-glucosidase 4 (180 aa).

Its function is as follows. Hydrolyzes cytokinin glucosides thus liberating free cytokinins. The protein is Cytokinin-beta-glucosidase 4 (ROLC4) of Panax ginseng (Korean ginseng).